Here is a 358-residue protein sequence, read N- to C-terminus: UDP-N-acetylglucosamine--N-acetylmuramyl-(pentapeptide) pyrophosphoryl-undecaprenol N-acetylglucosamine transferase (358 aa).

Residues 13–15 (TGG), N125, R161, S189, I244, and Q288 each bind UDP-N-acetyl-alpha-D-glucosamine.

It belongs to the glycosyltransferase 28 family. MurG subfamily.

It localises to the cell membrane. It catalyses the reaction di-trans,octa-cis-undecaprenyl diphospho-N-acetyl-alpha-D-muramoyl-L-alanyl-D-glutamyl-meso-2,6-diaminopimeloyl-D-alanyl-D-alanine + UDP-N-acetyl-alpha-D-glucosamine = di-trans,octa-cis-undecaprenyl diphospho-[N-acetyl-alpha-D-glucosaminyl-(1-&gt;4)]-N-acetyl-alpha-D-muramoyl-L-alanyl-D-glutamyl-meso-2,6-diaminopimeloyl-D-alanyl-D-alanine + UDP + H(+). Its pathway is cell wall biogenesis; peptidoglycan biosynthesis. Its function is as follows. Cell wall formation. Catalyzes the transfer of a GlcNAc subunit on undecaprenyl-pyrophosphoryl-MurNAc-pentapeptide (lipid intermediate I) to form undecaprenyl-pyrophosphoryl-MurNAc-(pentapeptide)GlcNAc (lipid intermediate II). The sequence is that of UDP-N-acetylglucosamine--N-acetylmuramyl-(pentapeptide) pyrophosphoryl-undecaprenol N-acetylglucosamine transferase from Baumannia cicadellinicola subsp. Homalodisca coagulata.